The sequence spans 137 residues: Basic phospholipase A2 DsM-S1 (137 aa).

A signal peptide spans 1–16 (MRTLWIVAVCLIGVEG). Intrachain disulfides connect C42/C131, C44/C60, C59/C111, C65/C137, C66/C104, C73/C97, and C91/C102. Y43, G45, and G47 together coordinate Ca(2+). H63 is a catalytic residue. Residue D64 coordinates Ca(2+). D105 is a catalytic residue.

This sequence belongs to the phospholipase A2 family. Group II subfamily. D49 sub-subfamily. Ca(2+) is required as a cofactor. Expressed by the venom gland.

The protein localises to the secreted. It carries out the reaction a 1,2-diacyl-sn-glycero-3-phosphocholine + H2O = a 1-acyl-sn-glycero-3-phosphocholine + a fatty acid + H(+). Its function is as follows. Snake venom phospholipase A2 (PLA2) that is neurotoxic. PLA2 catalyzes the calcium-dependent hydrolysis of the 2-acyl groups in 3-sn-phosphoglycerides. In Daboia siamensis (Eastern Russel's viper), this protein is Basic phospholipase A2 DsM-S1.